Here is a 509-residue protein sequence, read N- to C-terminus: Phytase A (509 aa).

Residues 1-15 (MFLLMVPLFSYLAAA) form the signal peptide. Cysteines 27 and 36 form a disulfide. Gln46, Tyr47, Arg75, His76, Arg79, Thr82, and Arg164 together coordinate 1D-myo-inositol hexakisphosphate. 4 disulfides stabilise this stretch: Cys65–Cys444, Cys216–Cys507, Cys266–Cys295, and Cys478–Cys486. The active-site Nucleophile is the His76. Residues Asn171 and Asn208 are each glycosylated (N-linked (GlcNAc...) asparagine). A 1D-myo-inositol hexakisphosphate-binding site is contributed by Lys314. N-linked (GlcNAc...) asparagine glycosylation is found at Asn348, Asn352, and Asn367. His376 and Asp377 together coordinate 1D-myo-inositol hexakisphosphate. A glycan (N-linked (GlcNAc...) asparagine) is linked at Asn401.

The protein belongs to the histidine acid phosphatase family. In terms of assembly, monomer.

Its subcellular location is the secreted. It carries out the reaction 1D-myo-inositol hexakisphosphate + H2O = 1D-myo-inositol 1,2,4,5,6-pentakisphosphate + phosphate. The enzyme catalyses 1D-myo-inositol 1,2,4,5,6-pentakisphosphate + H2O = 1D-myo-inositol 1,2,5,6-tetrakisphosphate + phosphate. It catalyses the reaction 1D-myo-inositol 1,2,5,6-tetrakisphosphate + H2O = 1D-myo-inositol 1,2,6-trisphosphate + phosphate. The catalysed reaction is 1D-myo-inositol 1,2,6-trisphosphate + H2O = 1D-myo-inositol 1,2-bisphosphate + phosphate. It carries out the reaction 1D-myo-inositol 1,2-bisphosphate + H2O = 1D-myo-inositol 2-phosphate + phosphate. Functionally, catalyzes the phosphate monoester hydrolysis of phytic acid (myo-inositol hexakisphosphate), which results in the stepwise formation of myo-inositol pentakis-, tetrakis-, tris-, bis-, and monophosphates, as well as the liberation of inorganic phosphate. Myo-inositol 2-monophosphate is the end product. Is also able to dephosphorylate the classic acid phosphatase substrate p-nitrophenyl phosphate. The chain is Phytase A (pht-1) from Neurospora crassa (strain ATCC 24698 / 74-OR23-1A / CBS 708.71 / DSM 1257 / FGSC 987).